We begin with the raw amino-acid sequence, 88 residues long: MANHKSSLKRAKQDIVRNTRNKSRKTALKTITKKVDALVADGAAEDAKTTLLAAQKLFDQTAAKGTIHKKTASRKISRLTRRVNAAAK.

Basic residues predominate over residues 1-10 (MANHKSSLKR). The disordered stretch occupies residues 1–24 (MANHKSSLKRAKQDIVRNTRNKSR).

The protein belongs to the bacterial ribosomal protein bS20 family.

Binds directly to 16S ribosomal RNA. The sequence is that of Small ribosomal subunit protein bS20 from Desulfosudis oleivorans (strain DSM 6200 / JCM 39069 / Hxd3) (Desulfococcus oleovorans).